The primary structure comprises 248 residues: Small ribosomal subunit protein uS3 (248 aa).

A KH type-2 domain is found at 38-106 (VREYLVKTLD…QVALNILEVK (69 aa)). The span at 213–230 (ESEINAPAERRGRGDRNG) shows a compositional bias: basic and acidic residues. The disordered stretch occupies residues 213–248 (ESEINAPAERRGRGDRNGRPRRGGQRRQRSEQKQEG).

Belongs to the universal ribosomal protein uS3 family. Part of the 30S ribosomal subunit. Forms a tight complex with proteins S10 and S14.

Binds the lower part of the 30S subunit head. Binds mRNA in the 70S ribosome, positioning it for translation. This chain is Small ribosomal subunit protein uS3, found in Corynebacterium diphtheriae (strain ATCC 700971 / NCTC 13129 / Biotype gravis).